Here is a 394-residue protein sequence, read N- to C-terminus: Elongation factor Tu (394 aa).

A tr-type G domain is found at Lys-10–Glu-204. The G1 stretch occupies residues Gly-19–Thr-26. Gly-19–Thr-26 provides a ligand contact to GTP. Thr-26 is a binding site for Mg(2+). Positions Gly-60 to Asn-64 are G2. The interval Asp-81–Gly-84 is G3. GTP-binding positions include Asp-81–His-85 and Asn-136–Asp-139. The segment at Asn-136 to Asp-139 is G4. A G5 region spans residues Ser-174–Leu-176.

This sequence belongs to the TRAFAC class translation factor GTPase superfamily. Classic translation factor GTPase family. EF-Tu/EF-1A subfamily. In terms of assembly, monomer.

The protein localises to the cytoplasm. It catalyses the reaction GTP + H2O = GDP + phosphate + H(+). Its function is as follows. GTP hydrolase that promotes the GTP-dependent binding of aminoacyl-tRNA to the A-site of ribosomes during protein biosynthesis. This chain is Elongation factor Tu, found in Colwellia psychrerythraea (strain 34H / ATCC BAA-681) (Vibrio psychroerythus).